The primary structure comprises 531 residues: Peptide chain release factor 3 (531 aa).

The tr-type G domain occupies Ser13 to Met282. Residues Ser22–Thr29, Asp90–His94, and Asn144–Asp147 contribute to the GTP site.

Belongs to the TRAFAC class translation factor GTPase superfamily. Classic translation factor GTPase family. PrfC subfamily.

It localises to the cytoplasm. Functionally, increases the formation of ribosomal termination complexes and stimulates activities of RF-1 and RF-2. It binds guanine nucleotides and has strong preference for UGA stop codons. It may interact directly with the ribosome. The stimulation of RF-1 and RF-2 is significantly reduced by GTP and GDP, but not by GMP. The protein is Peptide chain release factor 3 of Vibrio cholerae serotype O1 (strain ATCC 39541 / Classical Ogawa 395 / O395).